We begin with the raw amino-acid sequence, 266 residues long: Glutamate racemase (266 aa).

Substrate is bound by residues 9 to 10 (DS) and 41 to 42 (YG). Catalysis depends on Cys72, which acts as the Proton donor/acceptor. A substrate-binding site is contributed by 73 to 74 (NT). Cys184 functions as the Proton donor/acceptor in the catalytic mechanism. 185-186 (TH) lines the substrate pocket.

Belongs to the aspartate/glutamate racemases family.

It catalyses the reaction L-glutamate = D-glutamate. Its pathway is cell wall biogenesis; peptidoglycan biosynthesis. Provides the (R)-glutamate required for cell wall biosynthesis. This is Glutamate racemase from Staphylococcus aureus (strain bovine RF122 / ET3-1).